The primary structure comprises 478 residues: Ribosomal RNA small subunit methyltransferase F (478 aa).

S-adenosyl-L-methionine is bound by residues alanine 121–lysine 127, glutamate 145, aspartate 172, and aspartate 190. Catalysis depends on cysteine 243, which acts as the Nucleophile.

The protein belongs to the class I-like SAM-binding methyltransferase superfamily. RsmB/NOP family.

It is found in the cytoplasm. The enzyme catalyses cytidine(1407) in 16S rRNA + S-adenosyl-L-methionine = 5-methylcytidine(1407) in 16S rRNA + S-adenosyl-L-homocysteine + H(+). Its function is as follows. Specifically methylates the cytosine at position 1407 (m5C1407) of 16S rRNA. The sequence is that of Ribosomal RNA small subunit methyltransferase F from Shewanella woodyi (strain ATCC 51908 / MS32).